Consider the following 366-residue polypeptide: MTERDSSPEADKNGLADVVEETGMAGFLGHLVELRNRLLKGVLAVLVLFLILFPFRNELFTMLADPLSRHMPAGSTMIAVEVASPFFIPLKLTALTAVFIAIPFLLYQLWAFIAPGLYKHERKLVAPLVFSSTILFYLGAAFAYFVVFPVVFGFLSTAGPSDVNFAPDIGEYLSFVTSLFFAFGFVFEVPVAIVLLVIVGVVTPDKLAGFRRYAILIAFIIAAILTPPDVLSQFMMALPIIMLYEFGLFVSRFFYKAKLARAAEVEAEESGAADDESDEAVSARHAEYEAKAQTQADEPLDMDKAFDEAEADQRRLESDSSASDDGPESNTAGRTEEGEQPSTGSKPEDEPNAPSEPSPKKPDSPV.

Helical transmembrane passes span 42–62, 70–90, 97–117, 134–154, 179–199, 207–227, and 230–250; these read VLAV…LFTM, HMPA…FIPL, AVFI…APGL, ILFY…VFGF, LFFA…LVIV, LAGF…ILTP, and VLSQ…GLFV. Over residues 266–279 the composition is skewed to acidic residues; it reads EAEESGAADDESDE. The segment at 266–366 is disordered; the sequence is EAEESGAADD…PSPKKPDSPV (101 aa). 2 stretches are compositionally biased toward basic and acidic residues: residues 281-290 and 301-318; these read VSARHAEYEA and DMDK…RLES. A compositionally biased stretch (polar residues) spans 319–333; sequence DSSASDDGPESNTAG.

The protein belongs to the TatC family. As to quaternary structure, the Tat system comprises two distinct complexes: a TatABC complex, containing multiple copies of TatA, TatB and TatC subunits, and a separate TatA complex, containing only TatA subunits. Substrates initially bind to the TatABC complex, which probably triggers association of the separate TatA complex to form the active translocon.

The protein localises to the cell inner membrane. Its function is as follows. Part of the twin-arginine translocation (Tat) system that transports large folded proteins containing a characteristic twin-arginine motif in their signal peptide across membranes. Together with TatB, TatC is part of a receptor directly interacting with Tat signal peptides. In Halothiobacillus neapolitanus (strain ATCC 23641 / c2) (Thiobacillus neapolitanus), this protein is Sec-independent protein translocase protein TatC.